Here is an 882-residue protein sequence, read N- to C-terminus: E3 ubiquitin-protein ligase SH3RF3 (882 aa).

The segment at 18-42 (AQSEGDEDRPGERRRRRAAATAAGA) is disordered. Residues 57–98 (CSVCLERLDTTAKVLPCQHTFCRRCLESIVCSRHELRCPECR) form an RING-type zinc finger. A disordered region spans residues 124–159 (RPRAGTSPGGSPPARPIPGQSAAPTLAGGGGGAAGS). SH3 domains are found at residues 194-253 (CLLP…CIQP) and 256-319 (HAPP…LNDS). The interval 368–399 (RRVDGKKNTKKRHSFTALSVTHRSSQAASHRH) is disordered. The tract at residues 369–439 (RVDGKKNTKK…APTQDVSSSA (71 aa)) is interaction with RAC1. Ser400 carries the phosphoserine modification. The segment covering 433–444 (QDVSSSAGSTPT) has biased composition (polar residues). The tract at residues 433 to 458 (QDVSSSAGSTPTAVPRAASVSGEQGT) is disordered. Positions 464–525 (LPLNVYLALY…PGNYVTPVSR (62 aa)) constitute an SH3 3 domain. Polar residues-rich tracts occupy residues 575-588 (PQAH…SPPT), 596-635 (AQPT…NSPS), and 697-706 (LSTSSPTNTG). Disordered stretches follow at residues 575–664 (PQAH…CPRP) and 693–747 (PIGV…PTHD). Positions 708–721 (KLDEKKSEKKEKKS) are enriched in basic and acidic residues. At Ser797 the chain carries Phosphoserine. The SH3 4 domain occupies 823–882 (LPRERYRVVVSYPPQSEAEIELKEGDIVFVHKKREDGWYKGTLQRNGRTGLFPGSFVESF).

It belongs to the SH3RF family. In terms of assembly, interacts (via SH3 domain 3) with PAK2. Interacts with RAC1 (GTP-bound form). Post-translationally, autoubiquitinated.

The catalysed reaction is S-ubiquitinyl-[E2 ubiquitin-conjugating enzyme]-L-cysteine + [acceptor protein]-L-lysine = [E2 ubiquitin-conjugating enzyme]-L-cysteine + N(6)-ubiquitinyl-[acceptor protein]-L-lysine.. The protein operates within protein modification; protein ubiquitination. Its function is as follows. Has E3 ubiquitin-protein ligase activity. This Homo sapiens (Human) protein is E3 ubiquitin-protein ligase SH3RF3 (SH3RF3).